The chain runs to 90 residues: Acylphosphatase (90 aa).

The Acylphosphatase-like domain occupies 4 to 90; sequence RWRFLIEGSV…TGNDWFDVRT (87 aa). Active-site residues include Arg-19 and Asn-37.

This sequence belongs to the acylphosphatase family.

The catalysed reaction is an acyl phosphate + H2O = a carboxylate + phosphate + H(+). The sequence is that of Acylphosphatase (acyP) from Synechococcus sp. (strain CC9311).